Reading from the N-terminus, the 327-residue chain is Tagatose 1,6-diphosphate aldolase 2 (327 aa).

This sequence belongs to the aldolase LacD family.

The enzyme catalyses D-tagatofuranose 1,6-bisphosphate = D-glyceraldehyde 3-phosphate + dihydroxyacetone phosphate. It participates in carbohydrate metabolism; D-tagatose 6-phosphate degradation; D-glyceraldehyde 3-phosphate and glycerone phosphate from D-tagatose 6-phosphate: step 2/2. In Streptococcus pyogenes serotype M6 (strain ATCC BAA-946 / MGAS10394), this protein is Tagatose 1,6-diphosphate aldolase 2.